The primary structure comprises 259 residues: TCF3 fusion partner homolog (259 aa).

2 disordered regions span residues 50–72 (GGLG…GRRR) and 141–210 (EDDG…APVQ). Position 167 is a phosphoserine (Ser167). Residues 167–178 (SPSQRTTATLDP) show a composition bias toward polar residues. At Thr172 the chain carries Phosphothreonine. Ser180 and Ser188 each carry phosphoserine. A Phosphothreonine modification is found at Thr203. Lys222 is covalently cross-linked (Glycyl lysine isopeptide (Lys-Gly) (interchain with G-Cter in SUMO2)). Ser255 is subject to Phosphoserine.

As to quaternary structure, interacts with NOL3; translocates NOL3 into the nucleus and negatively regulated TFPT-induced cell death. Component of the chromatin remodeling INO80 complex; specifically part of a complex module associated with the N-terminus of INO80.

The protein resides in the nucleus. Its function is as follows. Appears to promote apoptosis in a p53/TP53-independent manner. Putative regulatory component of the chromatin remodeling INO80 complex which is involved in transcriptional regulation, DNA replication and probably DNA repair. The sequence is that of TCF3 fusion partner homolog (Tfpt) from Mus musculus (Mouse).